A 364-amino-acid chain; its full sequence is Phosphate acyltransferase (364 aa).

The interval 343-364 is disordered; that stretch reads IRTSGRSGGKSKSSAAREDGAA.

It belongs to the PlsX family. As to quaternary structure, homodimer. Probably interacts with PlsY.

The protein localises to the cytoplasm. It catalyses the reaction a fatty acyl-[ACP] + phosphate = an acyl phosphate + holo-[ACP]. It participates in lipid metabolism; phospholipid metabolism. Its function is as follows. Catalyzes the reversible formation of acyl-phosphate (acyl-PO(4)) from acyl-[acyl-carrier-protein] (acyl-ACP). This enzyme utilizes acyl-ACP as fatty acyl donor, but not acyl-CoA. The chain is Phosphate acyltransferase from Novosphingobium aromaticivorans (strain ATCC 700278 / DSM 12444 / CCUG 56034 / CIP 105152 / NBRC 16084 / F199).